We begin with the raw amino-acid sequence, 185 residues long: Ribosome-recycling factor (185 aa).

The protein belongs to the RRF family.

It localises to the cytoplasm. Responsible for the release of ribosomes from messenger RNA at the termination of protein biosynthesis. May increase the efficiency of translation by recycling ribosomes from one round of translation to another. In Chloroflexus aggregans (strain MD-66 / DSM 9485), this protein is Ribosome-recycling factor.